A 1895-amino-acid chain; its full sequence is 1,3-beta-glucan synthase component GSC2 (1895 aa).

Composition is skewed to polar residues over residues 1 to 16 (MSYN…YSNG) and 25 to 34 (PTYQVTQDQS). 2 disordered regions span residues 1 to 143 (MSYN…PYGN) and 269 to 292 (ARKA…EETL). Over 1 to 473 (MSYNDPNLNG…WLHLVTNFNR (473 aa)) the chain is Extracellular. The segment covering 65 to 78 (QFPQGQDPSQDQGP) has biased composition (low complexity). Composition is skewed to polar residues over residues 79 to 107 (YNND…SDFS) and 115 to 141 (TYPN…STPY). The segment covering 269–278 (ARKAKKKNKK) has biased composition (basic residues). Lysine 278 participates in a covalent cross-link: Glycyl lysine isopeptide (Lys-Gly) (interchain with G-Cter in ubiquitin). 2 positions are modified to phosphothreonine: threonine 288 and threonine 291. Lysine 405 participates in a covalent cross-link: Glycyl lysine isopeptide (Lys-Gly) (interchain with G-Cter in ubiquitin). The chain crosses the membrane as a helical span at residues 474 to 494 (IWIMHISVYWMYCAYNAPTFY). Over 495 to 511 (THNYQQLVDNQPLAAYK) the chain is Cytoplasmic. Residues 512–532 (WATAALGGTVASLIQVAATLC) form a helical membrane-spanning segment. Over 533–550 (EWSFVPRKWAGAQHLSRR) the chain is Extracellular. The chain crosses the membrane as a helical span at residues 551–571 (FWFLCVIMGINLGPVIFVFAY). Over 572 to 582 (DKDTVYSTAAH) the chain is Cytoplasmic. A helical membrane pass occupies residues 583 to 603 (VVGAVMFFVAVATLVFFSVMP). The Extracellular segment spans residues 604 to 1579 (LGGLFTSYMK…DASRAHRTNL (976 aa)). Glycyl lysine isopeptide (Lys-Gly) (interchain with G-Cter in ubiquitin) cross-links involve residues lysine 929, lysine 934, lysine 1558, and lysine 1566. The helical transmembrane segment at 1580–1600 (IMAEIIPCAIYAAGCFIAFTF) threads the bilayer. The Cytoplasmic portion of the chain corresponds to 1601 to 1620 (INAQTGVKTTDEDRVNSTLR). A helical membrane pass occupies residues 1621–1641 (IIICTLAPIVIDIGVLFFCMG). Over 1642-1758 (LSCCSGPLLG…LTAKVIELSE (117 aa)) the chain is Extracellular. A helical transmembrane segment spans residues 1759 to 1779 (FAADFVLGHVILIFQLPVICI). Topologically, residues 1780-1821 (PKIDKFHSIMLFWLKPSRQIRPPIYSLKQARLRKRMVRRYCS) are cytoplasmic. The helical transmembrane segment at 1822–1842 (LYFLVLIIFAGCIVGPAVASA) threads the bilayer. Over 1843-1895 (HVPKDLGSGLTGTFHNLVQPRNVSNNDTGSQMSTYKSHYYTHTPSLKTWSTIK) the chain is Extracellular.

Belongs to the glycosyltransferase 48 family. In terms of assembly, component of the 1,3-beta-glucan synthase (GS) complex, composed of two alternate catalytic subunits FKS1 or GSC2, and a regulatory subunit RHO1. Interacts with SMK1.

Its subcellular location is the membrane. The enzyme catalyses [(1-&gt;3)-beta-D-glucosyl](n) + UDP-alpha-D-glucose = [(1-&gt;3)-beta-D-glucosyl](n+1) + UDP + H(+). Functionally, alternate catalytic subunit of the 1,3-beta-glucan synthase (GS) complex. Synthesizes 1,3-beta-glucan, a major structural component of the yeast cell wall. Required for spore wall assembly. Negative regulation of activity by SMK1 is important for spore wall deposition. Activity is positively regulated by RHO1. The chain is 1,3-beta-glucan synthase component GSC2 from Saccharomyces cerevisiae (strain ATCC 204508 / S288c) (Baker's yeast).